Here is a 337-residue protein sequence, read N- to C-terminus: Putative [LysW]-lysine/[LysW]-ornithine hydrolase (337 aa).

Residue His67 coordinates Zn(2+). Residue Asp69 is part of the active site. Asp91 lines the Zn(2+) pocket. The active-site Proton acceptor is the Glu118. 3 residues coordinate Zn(2+): Glu119, Glu140, and His298.

Belongs to the peptidase M20A family. LysK subfamily. Zn(2+) serves as cofactor. It depends on Co(2+) as a cofactor.

The protein resides in the cytoplasm. It catalyses the reaction [amino-group carrier protein]-C-terminal-gamma-(L-lysyl)-L-glutamate + H2O = [amino-group carrier protein]-C-terminal-L-glutamate + L-lysine. The enzyme catalyses [amino-group carrier protein]-C-terminal-gamma-(L-ornithyl)-L-glutamate + H2O = [amino-group carrier protein]-C-terminal-L-glutamate + L-ornithine. It participates in amino-acid biosynthesis; L-lysine biosynthesis via AAA pathway; L-lysine from L-alpha-aminoadipate (Thermus route): step 5/5. It functions in the pathway amino-acid biosynthesis; L-arginine biosynthesis. Its function is as follows. Catalyzes the release of L-lysine from [LysW]-gamma-L-lysine and the release of L-ornithine from [LysW]-L-ornithine. In Pyrococcus abyssi (strain GE5 / Orsay), this protein is Putative [LysW]-lysine/[LysW]-ornithine hydrolase.